The sequence spans 636 residues: Bifunctional phosphonoacetaldehyde hydrolase/aminoethylphosphonate transaminase (636 aa).

Residues Met-1–Asp-276 are phosphonoacetaldehyde hydrolase. Asp-15 acts as the Nucleophile in catalysis. The Mg(2+) site is built by Asp-15 and Ala-17. Residue Lys-56 is the Schiff-base intermediate with substrate of the active site. Asp-189 serves as a coordination point for Mg(2+). The interval Tyr-277–Arg-636 is 2-aminoethylphosphonate--pyruvate transaminase. Lys-465 is subject to N6-(pyridoxal phosphate)lysine.

This sequence in the N-terminal section; belongs to the HAD-like hydrolase superfamily. PhnX family. It in the C-terminal section; belongs to the class-V pyridoxal-phosphate-dependent aminotransferase family. PhnW subfamily. Homodimer. It depends on Mg(2+) as a cofactor. The cofactor is pyridoxal 5'-phosphate.

The catalysed reaction is (2-aminoethyl)phosphonate + pyruvate = phosphonoacetaldehyde + L-alanine. It carries out the reaction phosphonoacetaldehyde + H2O = acetaldehyde + phosphate + H(+). In terms of biological role, involved in phosphonate degradation. The protein is Bifunctional phosphonoacetaldehyde hydrolase/aminoethylphosphonate transaminase (phnXW) of Clostridioides difficile (strain 630) (Peptoclostridium difficile).